A 426-amino-acid chain; its full sequence is Adenylosuccinate synthetase (426 aa).

Residues 18-24 (GDEGKGK) and 46-48 (GHT) contribute to the GTP site. Aspartate 19 acts as the Proton acceptor in catalysis. 2 residues coordinate Mg(2+): aspartate 19 and glycine 46. Residues 19–22 (DEGK), 44–47 (NAGH), threonine 136, arginine 150, glutamine 222, threonine 237, and arginine 301 each bind IMP. The Proton donor role is filled by histidine 47. A substrate-binding site is contributed by 297–303 (VTTKRKR). Residues arginine 303, 329 to 331 (KID), and 413 to 415 (GTG) each bind GTP.

It belongs to the adenylosuccinate synthetase family. Homodimer. Requires Mg(2+) as cofactor.

Its subcellular location is the cytoplasm. It catalyses the reaction IMP + L-aspartate + GTP = N(6)-(1,2-dicarboxyethyl)-AMP + GDP + phosphate + 2 H(+). The protein operates within purine metabolism; AMP biosynthesis via de novo pathway; AMP from IMP: step 1/2. In terms of biological role, plays an important role in the de novo pathway and in the salvage pathway of purine nucleotide biosynthesis. Catalyzes the first committed step in the biosynthesis of AMP from IMP. This chain is Adenylosuccinate synthetase, found in Schistosoma mansoni (Blood fluke).